Reading from the N-terminus, the 335-residue chain is MIEFQNVHKTYRVAGKDITALHPTSFSIENGQVFGLIGHSGAGKSTLLRLINRLEQSSGGKIIVDGEEVTALDANGLRRFRQQVGMIFQHFNLLASKTVADNVALPLTLAGELSRAEIDQRVAELLARVGLSDHAKKYPAQLSGGQKQRVGIARALATKPKILLCDEATSALDPQTTASVLQLLAEINRELKLTIVLITHEMDVIRRVCDQVGVMDAGVIVEQGSVADVFLHPKHPTTKRFVQESEQIDESEQRDDFAHVPGRIVRLTFQGEATYAPLLGTVARETGVDYSILAGRIDRIKDIPYGQLTLAVTGGDMDAAFARFTAADVHMEVLR.

The ABC transporter domain occupies 2 to 242 (IEFQNVHKTY…PKHPTTKRFV (241 aa)). An ATP-binding site is contributed by 38-45 (GHSGAGKS).

Belongs to the ABC transporter superfamily. Methionine importer (TC 3.A.1.24) family. The complex is composed of two ATP-binding proteins (MetN), two transmembrane proteins (MetI) and a solute-binding protein (MetQ).

It localises to the cell inner membrane. It catalyses the reaction L-methionine(out) + ATP + H2O = L-methionine(in) + ADP + phosphate + H(+). The enzyme catalyses D-methionine(out) + ATP + H2O = D-methionine(in) + ADP + phosphate + H(+). Part of the ABC transporter complex MetNIQ involved in methionine import. Responsible for energy coupling to the transport system. In Pseudomonas fluorescens (strain Pf0-1), this protein is Methionine import ATP-binding protein MetN 1.